The sequence spans 797 residues: Speckle targeted PIP5K1A-regulated poly(A) polymerase (797 aa).

The Matrin-type zinc finger occupies F14–L44. In terms of domain architecture, RRM spans N54–K126. ATP is bound at residue S205. Mg(2+) contacts are provided by D216 and D218. UTP is bound by residues D216, D218, N319, R341, Y363, and H495. Residue N319 participates in ATP binding. The PAP-associated domain occupies D421–H495. The KA1; binds the bulging loops of U6 snRNA but is dispensable for terminal uridylyltransferase activity stretch occupies residues Q544–M787. Positions E611–T659 are disordered. Basic and acidic residues predominate over residues S615–S624. Polar residues predominate over residues E627–Q640.

The protein belongs to the DNA polymerase type-B-like family. In terms of assembly, associates with the cleavage and polyadenylation specificity factor (CPSF) complex. Requires Mg(2+) as cofactor. The cofactor is Mn(2+).

It localises to the nucleus. Its subcellular location is the nucleolus. It is found in the nucleus speckle. The enzyme catalyses RNA(n) + UTP = RNA(n)-3'-uridine ribonucleotide + diphosphate. It catalyses the reaction RNA(n) + ATP = RNA(n)-3'-adenine ribonucleotide + diphosphate. In terms of biological role, poly(A) polymerase that creates the 3'-poly(A) tail of specific pre-mRNAs. In addition to polyadenylation, it is also required for the 3'-end cleavage of pre-mRNAs: binds to the 3'UTR of targeted pre-mRNAs and promotes the recruitment and assembly of the CPSF complex on the 3'UTR of pre-mRNAs. In addition to adenylyltransferase activity, also has uridylyltransferase activity. However, the ATP ratio is higher than UTP in cells, suggesting that it functions primarily as a poly(A) polymerase. The protein is Speckle targeted PIP5K1A-regulated poly(A) polymerase (tut1) of Danio rerio (Zebrafish).